The following is a 104-amino-acid chain: Large ribosomal subunit protein uL24 (104 aa).

The protein belongs to the universal ribosomal protein uL24 family. Part of the 50S ribosomal subunit.

One of two assembly initiator proteins, it binds directly to the 5'-end of the 23S rRNA, where it nucleates assembly of the 50S subunit. Functionally, one of the proteins that surrounds the polypeptide exit tunnel on the outside of the subunit. This Klebsiella pneumoniae (strain 342) protein is Large ribosomal subunit protein uL24.